A 338-amino-acid chain; its full sequence is Nicotinate-nucleotide--dimethylbenzimidazole phosphoribosyltransferase (338 aa).

Glu305 serves as the catalytic Proton acceptor.

This sequence belongs to the CobT family.

It catalyses the reaction 5,6-dimethylbenzimidazole + nicotinate beta-D-ribonucleotide = alpha-ribazole 5'-phosphate + nicotinate + H(+). It participates in nucleoside biosynthesis; alpha-ribazole biosynthesis; alpha-ribazole from 5,6-dimethylbenzimidazole: step 1/2. Its function is as follows. Catalyzes the synthesis of alpha-ribazole-5'-phosphate from nicotinate mononucleotide (NAMN) and 5,6-dimethylbenzimidazole (DMB). The sequence is that of Nicotinate-nucleotide--dimethylbenzimidazole phosphoribosyltransferase from Rhizobium etli (strain ATCC 51251 / DSM 11541 / JCM 21823 / NBRC 15573 / CFN 42).